Consider the following 316-residue polypeptide: MQGNFSKKIDPMSNLPFTVAALYCFAPLPQYESLREPLAQLCCANGIKGTLLLAAEGINGTVAGSAGAIEKLIAHITAIPGLGEPELKYSHASEMPFHRMKVRLKREIVTMGVEGIDPLKSVGTYIAPKDWNALIADENTVVVDKRNDYEYAIGTFEGAIDPQTRTFREFPEWVKQNRDRLEGKKIAMFCTGGIRCEKATAFVKGLGFDDVYHLKGGILKYLEEVPREQSMWNGECFVFDERVAVGHGLAESDVELCRACRRPLTPQDKLSQFFEEGVSCAGCYAERTPEDRARYAERQKQVKLAEKRGANKHIGS.

The Rhodanese domain occupies alanine 136 to serine 230. Catalysis depends on cysteine 190, which acts as the Cysteine persulfide intermediate.

Belongs to the TrhO family.

It carries out the reaction uridine(34) in tRNA + AH2 + O2 = 5-hydroxyuridine(34) in tRNA + A + H2O. Its function is as follows. Catalyzes oxygen-dependent 5-hydroxyuridine (ho5U) modification at position 34 in tRNAs. In Brucella abortus (strain 2308), this protein is tRNA uridine(34) hydroxylase.